We begin with the raw amino-acid sequence, 139 residues long: MKKAALLNSDISSVIARLGHTDSLVIGDAGLPIPETTTRIDLALTHNVPTFLQVVNVVTSEMQVEAAILAEEMIEKNPAVHDALLDQLKRLEQHQGNSIALHYVSHEEFKTQSGKSRAIIRSGECSPYANVILCAGVTF.

Histidine 20 serves as the catalytic Proton donor. Substrate contacts are provided by residues aspartate 28, histidine 106, and 128 to 130 (YAN).

Belongs to the RbsD / FucU family. RbsD subfamily. As to quaternary structure, homodecamer.

Its subcellular location is the cytoplasm. The enzyme catalyses beta-D-ribopyranose = beta-D-ribofuranose. It functions in the pathway carbohydrate metabolism; D-ribose degradation; D-ribose 5-phosphate from beta-D-ribopyranose: step 1/2. Its function is as follows. Catalyzes the interconversion of beta-pyran and beta-furan forms of D-ribose. The chain is D-ribose pyranase from Pectobacterium atrosepticum (strain SCRI 1043 / ATCC BAA-672) (Erwinia carotovora subsp. atroseptica).